Consider the following 345-residue polypeptide: Sesquiterpene synthase GALMADRAFT_104215 (345 aa).

Positions 91, 226, 230, and 234 each coordinate Mg(2+). Positions 91 to 95 (DEFTD) match the DDXXD motif motif. The (2E,6E)-farnesyl diphosphate site is built by R316 and Y317.

Belongs to the terpene synthase family. It depends on Mg(2+) as a cofactor.

It catalyses the reaction (2E,6E)-farnesyl diphosphate = beta-gurjunene + diphosphate. In terms of biological role, terpene cyclase that catalyzes the cyclization of farnesyl diphosphate (FPP) to beta-gurjunene. This chain is Sesquiterpene synthase GALMADRAFT_104215, found in Galerina marginata (strain CBS 339.88).